A 435-amino-acid polypeptide reads, in one-letter code: Serine--tRNA ligase (435 aa).

The interval 48–68 (MKAQRNEASKKIGEAKRNGES) is disordered. Over residues 49 to 68 (KAQRNEASKKIGEAKRNGES) the composition is skewed to basic and acidic residues. 230–232 (TAE) serves as a coordination point for L-serine. Residue 261–263 (RSE) participates in ATP binding. Glu284 lines the L-serine pocket. Position 348–351 (348–351 (EVSS)) interacts with ATP. Residue Ser383 participates in L-serine binding.

It belongs to the class-II aminoacyl-tRNA synthetase family. Type-1 seryl-tRNA synthetase subfamily. Homodimer. The tRNA molecule binds across the dimer.

Its subcellular location is the cytoplasm. It catalyses the reaction tRNA(Ser) + L-serine + ATP = L-seryl-tRNA(Ser) + AMP + diphosphate + H(+). It carries out the reaction tRNA(Sec) + L-serine + ATP = L-seryl-tRNA(Sec) + AMP + diphosphate + H(+). Its pathway is aminoacyl-tRNA biosynthesis; selenocysteinyl-tRNA(Sec) biosynthesis; L-seryl-tRNA(Sec) from L-serine and tRNA(Sec): step 1/1. In terms of biological role, catalyzes the attachment of serine to tRNA(Ser). Is also able to aminoacylate tRNA(Sec) with serine, to form the misacylated tRNA L-seryl-tRNA(Sec), which will be further converted into selenocysteinyl-tRNA(Sec). This Limosilactobacillus reuteri (strain DSM 20016) (Lactobacillus reuteri) protein is Serine--tRNA ligase.